Reading from the N-terminus, the 58-residue chain is SPbeta prophage-derived uncharacterized protein YotN (58 aa).

The sequence is that of SPbeta prophage-derived uncharacterized protein YotN (yotN) from Bacillus subtilis (strain 168).